A 98-amino-acid polypeptide reads, in one-letter code: Cobalt transport protein CbiN (98 aa).

The next 2 helical transmembrane spans lie at 6–26 (VLMILGVIILTLAPLIMYSGL) and 68–88 (SLLFALQAAIGAIIIGYFFGY).

Belongs to the CbiN family. As to quaternary structure, forms an energy-coupling factor (ECF) transporter complex composed of an ATP-binding protein (A component, CbiO), a transmembrane protein (T component, CbiQ) and 2 possible substrate-capture proteins (S components, CbiM and CbiN) of unknown stoichimetry.

Its subcellular location is the cell membrane. It participates in cofactor biosynthesis; adenosylcobalamin biosynthesis. In terms of biological role, part of the energy-coupling factor (ECF) transporter complex CbiMNOQ involved in cobalt import. This Methanococcus maripaludis (strain DSM 14266 / JCM 13030 / NBRC 101832 / S2 / LL) protein is Cobalt transport protein CbiN.